Reading from the N-terminus, the 117-residue chain is Appetite-regulating hormone (117 aa).

The N-terminal stretch at 1–23 is a signal peptide; the sequence is MPSLGTMCSLLLFSVLWVDLAMA. Ser26 carries O-decanoyl serine; alternate lipidation. Residue Ser26 is the site of O-hexanoyl serine; alternate attachment. The O-octanoyl serine; alternate moiety is linked to residue Ser26. Residues 30 to 68 are disordered; sequence PEHQKLQQRKESKKPPAKLQPRALEGSLGPEDTSQVEEA. A compositionally biased stretch (basic and acidic residues) spans 31–43; that stretch reads EHQKLQQRKESKK. Residues 52-75 constitute a propeptide, removed in mature form; it reads ALEGSLGPEDTSQVEEAEDELEIR. A Leucine amide modification is found at Leu98. A propeptide spans 99–117 (removed in mature form); sequence GKFLQEVLWEDTNEALADE.

Belongs to the motilin family. O-octanoylated by GOAT/MBOAT4. O-octanoylation is essential for ghrelin activity. In terms of processing, amidation of Leu-98 is essential for obestatin activity.

Its subcellular location is the secreted. Its function is as follows. Ghrelin is the ligand for growth hormone secretagogue receptor type 1 (GHSR). Induces the release of growth hormone from the pituitary. Has an appetite-stimulating effect, induces adiposity and stimulates gastric acid secretion. Involved in growth regulation. In terms of biological role, obestatin may be the ligand for GPR39. May have an appetite-reducing effect resulting in decreased food intake. May reduce gastric emptying activity and jejunal motility. This Canis lupus familiaris (Dog) protein is Appetite-regulating hormone (GHRL).